Reading from the N-terminus, the 202-residue chain is GTP-binding protein rho1 (202 aa).

Residue Gly13–Thr20 participates in GTP binding. Residues Tyr35–Tyr43 carry the Effector region motif. GTP-binding positions include Asp60–Gln64 and Cys118–Asp121. At Cys199 the chain carries Cysteine methyl ester. A lipid anchor (S-geranylgeranyl cysteine) is attached at Cys199. Residues Ile200–Leu202 constitute a propeptide, removed in mature form.

Belongs to the small GTPase superfamily. Rho family.

It localises to the cell membrane. In terms of biological role, involved in the regulation of cell wall growth and actin cytoskeleton organization. Activates (1,3)-beta-D-glucan synthase. The chain is GTP-binding protein rho1 (rho1) from Schizosaccharomyces pombe (strain 972 / ATCC 24843) (Fission yeast).